The chain runs to 172 residues: Pollen-specific protein-like At4g18596 (172 aa).

An N-terminal signal peptide occupies residues 1–27 (MASKAIFFFFVSAVCLSSLAGVAIADA). Disulfide bonds link Cys41–Cys112, Cys44–Cys157, and Cys65–Cys100. A glycan (N-linked (GlcNAc...) asparagine) is linked at Asn70.

This sequence belongs to the Ole e I family.

The protein resides in the secreted. The protein is Pollen-specific protein-like At4g18596 of Arabidopsis thaliana (Mouse-ear cress).